Consider the following 1049-residue polypeptide: Carbamoyl phosphate synthase large chain (1049 aa).

The tract at residues 1–399 (MRESVRKVLV…SLQKAVRMLD (399 aa)) is carboxyphosphate synthetic domain. R127, R167, G173, G174, K206, L208, E213, G239, V240, H241, Q282, and E296 together coordinate ATP. Residues 131-325 (RETMINVGLP…LAYVSAKLAL (195 aa)) enclose the ATP-grasp 1 domain. 3 residues coordinate Mg(2+): Q282, E296, and N298. Mn(2+) is bound by residues Q282, E296, and N298. Positions 400–548 (IGEPGVVGGK…LTYNGTEDDI (149 aa)) are oligomerization domain. The carbamoyl phosphate synthetic domain stretch occupies residues 549–930 (EFSEAGNKLL…LKSWLSSSPN (382 aa)). The region spanning 674-864 (SKLLDKLGIK…IISLALDGIL (191 aa)) is the ATP-grasp 2 domain. ATP-binding residues include R710, K749, L751, E756, G780, V781, H782, S783, Q823, and E835. 3 residues coordinate Mg(2+): Q823, E835, and N837. Q823, E835, and N837 together coordinate Mn(2+). Residues 930–1049 (NKIPNKEGIA…YEISEYGAGI (120 aa)) enclose the MGS-like domain. Residues 931-1049 (KIPNKEGIAL…YEISEYGAGI (119 aa)) form an allosteric domain region.

This sequence belongs to the CarB family. In terms of assembly, composed of two chains; the small (or glutamine) chain promotes the hydrolysis of glutamine to ammonia, which is used by the large (or ammonia) chain to synthesize carbamoyl phosphate. Tetramer of heterodimers (alpha,beta)4. Mg(2+) is required as a cofactor. Mn(2+) serves as cofactor.

The catalysed reaction is hydrogencarbonate + L-glutamine + 2 ATP + H2O = carbamoyl phosphate + L-glutamate + 2 ADP + phosphate + 2 H(+). It carries out the reaction hydrogencarbonate + NH4(+) + 2 ATP = carbamoyl phosphate + 2 ADP + phosphate + 2 H(+). It functions in the pathway amino-acid biosynthesis; L-arginine biosynthesis; carbamoyl phosphate from bicarbonate: step 1/1. Its pathway is pyrimidine metabolism; UMP biosynthesis via de novo pathway; (S)-dihydroorotate from bicarbonate: step 1/3. Its function is as follows. Large subunit of the glutamine-dependent carbamoyl phosphate synthetase (CPSase). CPSase catalyzes the formation of carbamoyl phosphate from the ammonia moiety of glutamine, carbonate, and phosphate donated by ATP, constituting the first step of 2 biosynthetic pathways, one leading to arginine and/or urea and the other to pyrimidine nucleotides. The large subunit (synthetase) binds the substrates ammonia (free or transferred from glutamine from the small subunit), hydrogencarbonate and ATP and carries out an ATP-coupled ligase reaction, activating hydrogencarbonate by forming carboxy phosphate which reacts with ammonia to form carbamoyl phosphate. The sequence is that of Carbamoyl phosphate synthase large chain from Sulfurisphaera tokodaii (strain DSM 16993 / JCM 10545 / NBRC 100140 / 7) (Sulfolobus tokodaii).